A 154-amino-acid polypeptide reads, in one-letter code: Low molecular weight protein-tyrosine-phosphatase PtpA (154 aa).

Cys8 functions as the Nucleophile in the catalytic mechanism. Arg14 is an active-site residue. The Proton donor role is filled by Asp120.

Belongs to the low molecular weight phosphotyrosine protein phosphatase family. Interacts with host CORO1A. Post-translationally, phosphorylations at Tyr-122 and Tyr-123 are essential for phosphatase activity.

It is found in the secreted. The enzyme catalyses O-phospho-L-tyrosyl-[protein] + H2O = L-tyrosyl-[protein] + phosphate. Functionally, secreted tyrosine phosphatase that plays a critical role during infection as a bacterial effector protein that counteracts host defenses. Required for intramacrophage survival. The protein is Low molecular weight protein-tyrosine-phosphatase PtpA (ptpA) of Staphylococcus aureus (strain MRSA252).